A 63-amino-acid chain; its full sequence is Large ribosomal subunit protein uL30 (63 aa).

It belongs to the universal ribosomal protein uL30 family. As to quaternary structure, part of the 50S ribosomal subunit.

The sequence is that of Large ribosomal subunit protein uL30 from Geobacillus stearothermophilus (Bacillus stearothermophilus).